The chain runs to 74 residues: Conotoxin VnMEKL-0222 (74 aa).

The N-terminal stretch at 1–19 (MEKLTILLLVAAVLMSTQA) is a signal peptide. Positions 20–46 (LIQEKRPKEKIKFLSKRKSIPESWWEG) are excised as a propeptide. 3 cysteine pairs are disulfide-bonded: Cys-48–Cys-62, Cys-55–Cys-66, and Cys-61–Cys-71.

Belongs to the conotoxin O2 superfamily. Expressed by the venom duct.

Its subcellular location is the secreted. The chain is Conotoxin VnMEKL-0222 from Conus ventricosus (Mediterranean cone).